A 686-amino-acid polypeptide reads, in one-letter code: CAI-1 autoinducer sensor kinase/phosphatase CqsS (686 aa).

6 consecutive transmembrane segments (helical) span residues 21-41 (LVGW…EYWF), 47-64 (NLGL…LVFR), 77-97 (GYFL…MMLM), 100-120 (WSTI…LLVH), 124-144 (VMAL…YGLT), and 152-172 (IEWQ…LCFF). The 226-residue stretch at 191–416 (GIAHEMRNPL…EFVLSFPRYD (226 aa)) folds into the Histidine kinase domain. Phosphohistidine; by autocatalysis is present on H194. The 118-residue stretch at 569-686 (RILVVDDNQS…VLLNKVAAWV (118 aa)) folds into the Response regulatory domain. D618 is modified (4-aspartylphosphate).

Its subcellular location is the cell membrane. The enzyme catalyses ATP + protein L-histidine = ADP + protein N-phospho-L-histidine.. In terms of biological role, senses the quorum-sensing autoinducer CAI-1 ((S)-3-hydroxytridecan-4-one) which probably functions as an intragenus signal. The sensory signal is then relayed to LuxU and LuxO. The sequence is that of CAI-1 autoinducer sensor kinase/phosphatase CqsS (cqsS) from Vibrio cholerae serotype O1 (strain ATCC 39315 / El Tor Inaba N16961).